A 510-amino-acid polypeptide reads, in one-letter code: UDP-N-acetylmuramyl-tripeptide synthetase (510 aa).

UDP-N-acetyl-alpha-D-muramoyl-L-alanyl-D-glutamate is bound at residue Ser36. Position 113 to 119 (113 to 119) interacts with ATP; the sequence is GTKGKTT. UDP-N-acetyl-alpha-D-muramoyl-L-alanyl-D-glutamate is bound by residues 159–160, Ser186, and Arg194; that span reads TT. An N6-carboxylysine modification is found at Lys228.

The protein belongs to the MurCDEF family. MurE subfamily. In terms of processing, carboxylation is probably crucial for Mg(2+) binding and, consequently, for the gamma-phosphate positioning of ATP.

The protein resides in the cytoplasm. The protein operates within cell wall biogenesis; peptidoglycan biosynthesis. In terms of biological role, catalyzes the addition of an amino acid to the nucleotide precursor UDP-N-acetylmuramoyl-L-alanyl-D-glutamate (UMAG) in the biosynthesis of bacterial cell-wall peptidoglycan. The protein is UDP-N-acetylmuramyl-tripeptide synthetase of Ligilactobacillus salivarius (strain UCC118) (Lactobacillus salivarius).